A 270-amino-acid chain; its full sequence is Dehydrodolichyl diphosphate synthase (270 aa).

The protein belongs to the UPP synthase family.

It is found in the endoplasmic reticulum membrane. Its pathway is protein modification; protein glycosylation. Its function is as follows. Cis-prenyl transferase that adds multiple copies of isopentenyl pyrophosphate (IPP) to farnesyl pyrophosphate (FPP) to produce dehydrodolichyl diphosphate (Dedol-PP). The chain is Dehydrodolichyl diphosphate synthase (RER2) from Encephalitozoon cuniculi (strain GB-M1) (Microsporidian parasite).